Reading from the N-terminus, the 218-residue chain is Cytochrome b6 (218 aa).

The helical transmembrane segment at Ile35 to Phe55 threads the bilayer. Cys38 is a binding site for heme c. 2 residues coordinate heme b: His89 and His103. Helical transmembrane passes span Ala93–Phe113, Leu119–Tyr139, and Leu189–Ile209. His190 and His205 together coordinate heme b.

This sequence belongs to the cytochrome b family. PetB subfamily. As to quaternary structure, the 4 large subunits of the cytochrome b6-f complex are cytochrome b6, subunit IV (17 kDa polypeptide, PetD), cytochrome f and the Rieske protein, while the 4 small subunits are PetG, PetL, PetM and PetN. The complex functions as a dimer. Heme b serves as cofactor. Requires heme c as cofactor.

Its subcellular location is the cellular thylakoid membrane. Its function is as follows. Component of the cytochrome b6-f complex, which mediates electron transfer between photosystem II (PSII) and photosystem I (PSI), cyclic electron flow around PSI, and state transitions. In Prochlorococcus marinus (strain MIT 9211), this protein is Cytochrome b6.